The primary structure comprises 76 residues: MVCIPCIVIPVLLWVYKKFLEPYIYPLISPFVSRMWPRKAIRETNDKNKGKVDYKGADINGLPTRGPTEMCDKKKD.

The segment at 1 to 37 (MVCIPCIVIPVLLWVYKKFLEPYIYPLISPFVSRMWP) is necessary for its localzation to the endoplasmic reticulum and lipid droplets. Over residues 47–56 (KNKGKVDYKG) the composition is skewed to basic and acidic residues. Positions 47-76 (KNKGKVDYKGADINGLPTRGPTEMCDKKKD) are disordered.

The protein belongs to the UPF0729 family. Interacts with DERL1 and AMFR. Undergoes ER-associated degradation (ERAD).

It is found in the endoplasmic reticulum. It localises to the lipid droplet. May activate the NF-kappa-B signaling pathway. In Bos taurus (Bovine), this protein is UPF0729 protein C18orf32 homolog.